A 250-amino-acid polypeptide reads, in one-letter code: Adenosylcobinamide-GDP ribazoletransferase (250 aa).

Transmembrane regions (helical) follow at residues 33–53, 63–83, 109–129, 137–157, 180–200, and 203–223; these read IASY…LLYI, IVMT…HIDG, LGTN…LFLT, LTAL…SMMI, FAIA…LAVF, and ILTI…LRIG.

Belongs to the CobS family. Mg(2+) serves as cofactor.

The protein localises to the cell membrane. It carries out the reaction alpha-ribazole + adenosylcob(III)inamide-GDP = adenosylcob(III)alamin + GMP + H(+). The catalysed reaction is alpha-ribazole 5'-phosphate + adenosylcob(III)inamide-GDP = adenosylcob(III)alamin 5'-phosphate + GMP + H(+). The protein operates within cofactor biosynthesis; adenosylcobalamin biosynthesis; adenosylcobalamin from cob(II)yrinate a,c-diamide: step 7/7. In terms of biological role, joins adenosylcobinamide-GDP and alpha-ribazole to generate adenosylcobalamin (Ado-cobalamin). Also synthesizes adenosylcobalamin 5'-phosphate from adenosylcobinamide-GDP and alpha-ribazole 5'-phosphate. This Thermoanaerobacter pseudethanolicus (strain ATCC 33223 / 39E) (Clostridium thermohydrosulfuricum) protein is Adenosylcobinamide-GDP ribazoletransferase.